The primary structure comprises 572 residues: Proline--tRNA ligase (572 aa).

It belongs to the class-II aminoacyl-tRNA synthetase family. ProS type 1 subfamily. Homodimer.

The protein localises to the cytoplasm. The catalysed reaction is tRNA(Pro) + L-proline + ATP = L-prolyl-tRNA(Pro) + AMP + diphosphate. Its function is as follows. Catalyzes the attachment of proline to tRNA(Pro) in a two-step reaction: proline is first activated by ATP to form Pro-AMP and then transferred to the acceptor end of tRNA(Pro). As ProRS can inadvertently accommodate and process non-cognate amino acids such as alanine and cysteine, to avoid such errors it has two additional distinct editing activities against alanine. One activity is designated as 'pretransfer' editing and involves the tRNA(Pro)-independent hydrolysis of activated Ala-AMP. The other activity is designated 'posttransfer' editing and involves deacylation of mischarged Ala-tRNA(Pro). The misacylated Cys-tRNA(Pro) is not edited by ProRS. The polypeptide is Proline--tRNA ligase (Caldicellulosiruptor saccharolyticus (strain ATCC 43494 / DSM 8903 / Tp8T 6331)).